Reading from the N-terminus, the 224-residue chain is UPF0758 protein VSAL_I0192 (224 aa).

An MPN domain is found at 102–224; that stretch reads ALTSPEHTKR…IVSFAERGWI (123 aa). Residues His-173, His-175, and Asp-186 each contribute to the Zn(2+) site. A JAMM motif motif is present at residues 173–186; sequence HNHPSGVAEPSQAD.

It belongs to the UPF0758 family.

This is UPF0758 protein VSAL_I0192 from Aliivibrio salmonicida (strain LFI1238) (Vibrio salmonicida (strain LFI1238)).